We begin with the raw amino-acid sequence, 611 residues long: Procollagen galactosyltransferase 1-A (611 aa).

The signal sequence occupies residues 1–24 (MSQAGVDRLLRGLQLLLLVLRLSA). Asn85, Asn173, Asn312, Asn370, and Asn568 each carry an N-linked (GlcNAc...) asparagine glycan. Basic and acidic residues predominate over residues 575–591 (WDRAKSRKTQQQEKLRS). The tract at residues 575–611 (WDRAKSRKTQQQEKLRSEALNSPSLGSPFDNTARDEL) is disordered. Positions 608-611 (RDEL) match the Prevents secretion from ER motif.

It belongs to the glycosyltransferase 25 family.

The protein localises to the endoplasmic reticulum lumen. The catalysed reaction is (5R)-5-hydroxy-L-lysyl-[collagen] + UDP-alpha-D-galactose = (5R)-5-O-(beta-D-galactosyl)-5-hydroxy-L-lysyl-[collagen] + UDP + H(+). In terms of biological role, beta-galactosyltransferase that transfers beta-galactose to hydroxylysine residues of type I collagen. By acting on collagen glycosylation, facilitates the formation of collagen triple helix. In Xenopus laevis (African clawed frog), this protein is Procollagen galactosyltransferase 1-A (colgalt1-a).